Here is a 621-residue protein sequence, read N- to C-terminus: F-box/LRR-repeat protein 4 (621 aa).

Residue Arg-28 is modified to Asymmetric dimethylarginine. An F-box domain is found at 277–332 (NGYFDKLPYELIQLILNHLTLPDLCRLAQTCKLLSQHCCDPLQYIHLNLQPYWAKL). 9 LRR repeats span residues 376–397 (ELVRLELSCSHFLNETCLEVIS), 402–421 (NLQALNLSSCDKLPPQAFNH), 427–448 (SLKRLVLYRTKVEQTALLSILN), 452–474 (ELQHLSLGSCVMIEDYDVIASMI), 480–501 (KLRTLDLWRCKNITENGIAELA), 504–524 (CPLLEELDLGWCPTLQSSTGC), 532–558 (LPNLQKLFLTANRSVCDTDIDELACNC), 559–583 (TRLQQLDILGTRMVSPASLRKLLES), and 584–609 (CKDLSLLDVSFCSQIDNRAVLELNAS).

In terms of assembly, part of a SCF (SKP1-CUL1-F-box) protein ligase complex. Interacts with VCP. Interacts with PPTC7; this interaction promotes destruction of BNIP3 and NIX and mitophagy suppression. As to expression, expressed in heart, kidney, liver, lung, pancreas, and placenta, but not in skeletal muscle.

The protein resides in the cytoplasm. It is found in the nucleus. Its subcellular location is the mitochondrion outer membrane. Functionally, substrate-recognition component of the mitochondria-localized SCF-FBXL4 ubiquitin E3 ligase complex that plays a role in the restriction of mitophagy by controlling the degradation of BNIP3 and NIX mitophagy receptors. Rescues also mitochondrial injury through reverting hyperactivation of DRP1-mediated mitochondrial fission. This is F-box/LRR-repeat protein 4 (FBXL4) from Homo sapiens (Human).